A 28-amino-acid chain; its full sequence is Grammistin Gs A (28 aa).

This sequence belongs to the grammistin family. Group 3 subfamily. Exists as aggregates of 3-4 molecules. As to expression, expressed by the skin glands.

The protein resides in the secreted. Functionally, thanks to its amphiphilic alpha-helice(s), it may integrate into membrane phospholipids, leading to lysis of the membrane. Has no substantial hemolytic activity. Has antibacterial activity with a broad spectrum against various species of bacteria including both Gram-positive and Gram-negative groups. The chain is Grammistin Gs A from Grammistes sexlineatus (Goldenstriped soapfish).